A 224-amino-acid polypeptide reads, in one-letter code: UPF0758 protein AHA_0160 (224 aa).

An MPN domain is found at 102–224; the sequence is PLTSPQLTRD…TVSFAERGWL (123 aa). Positions 173, 175, and 186 each coordinate Zn(2+). The JAMM motif signature appears at 173–186; the sequence is HNHPSGVAEPSRAD.

Belongs to the UPF0758 family.

This Aeromonas hydrophila subsp. hydrophila (strain ATCC 7966 / DSM 30187 / BCRC 13018 / CCUG 14551 / JCM 1027 / KCTC 2358 / NCIMB 9240 / NCTC 8049) protein is UPF0758 protein AHA_0160.